We begin with the raw amino-acid sequence, 74 residues long: Small ribosomal subunit protein bS21 (74 aa).

It belongs to the bacterial ribosomal protein bS21 family.

In Coxiella burnetii (strain Dugway 5J108-111), this protein is Small ribosomal subunit protein bS21.